The chain runs to 116 residues: Nucleoid-associated protein Tfu_0045 (116 aa).

Belongs to the YbaB/EbfC family. Homodimer.

It localises to the cytoplasm. The protein localises to the nucleoid. Functionally, binds to DNA and alters its conformation. May be involved in regulation of gene expression, nucleoid organization and DNA protection. This Thermobifida fusca (strain YX) protein is Nucleoid-associated protein Tfu_0045.